The chain runs to 580 residues: MYPLDGSARPHPPGTTRLNSVEPDKQIGFTVLVRPQTGAPRLPDLAQWQAIPIAERQFLSTAGFERTYGSSEDDIVSVASFLEKAGMTIRSRHAGAGTVEVQAKTCQIHSVFAVQLLYYRGQLRPAARKRRDDKQPAEETYIGFEGCISLPAALHDKVIHIFGLDTRTFGASGGYSGDPPRAQRLIVAELAALYGFPAGVDASQQTIGIFSGEGNDDKGQSLSNYRPADVAAYFNNQTVGYNRAPTVVPVSLTVADQTYRNDPDHPTQELSQDIMTAATIAQGCTVNVYFSDLTEQGWLAFLTRVLFPQGEEKRPTIVSISWTMYDEQTYRDRLSFLFQRLAVVGTSVFAIAGDWGANNNIIDGQPHVGWPGSDPWVTCVGGTVVGNVRSSGAFTEHAWSDRDNPDSQFTIDGHLGVTGGGMSRVFATPPYQLSSGISAVTDCNGERWTGGRFIPDITGMVGFRGFIVNGKRNYFIGTSCSTPLYAGLFAALASALGGGGEGGVLFGPLNTVLYQIDRGVYRDITFGHNDSGDMPACAYFAAGEGYDTVSGLGSVDGRRTLEELRRIYWPKTKGFGCFRN.

The disordered stretch occupies residues 1-21 (MYPLDGSARPHPPGTTRLNSV). The region spanning 181–567 (RAQRLIVAEL…RRTLEELRRI (387 aa)) is the Peptidase S53 domain. A glycan (N-linked (GlcNAc...) asparagine) is linked at asparagine 236. Residues glutamate 269, aspartate 273, and serine 479 each act as charge relay system in the active site. 2 residues coordinate Ca(2+): aspartate 523 and isoleucine 524. The N-linked (GlcNAc...) asparagine glycan is linked to asparagine 529. 3 residues coordinate Ca(2+): glycine 543, glycine 545, and aspartate 547.

Ca(2+) serves as cofactor.

It localises to the secreted. The protein localises to the extracellular space. The catalysed reaction is Release of an N-terminal tripeptide from a polypeptide.. Its function is as follows. Secreted tripeptidyl-peptidase which degrades proteins at acidic pHs and is involved in virulence. This chain is Tripeptidyl-peptidase sed5 (sed5), found in Aspergillus fumigatus (strain ATCC MYA-4609 / CBS 101355 / FGSC A1100 / Af293) (Neosartorya fumigata).